A 1199-amino-acid polypeptide reads, in one-letter code: MISISEIHLKNFKSFKNTKLKIPDGFTAILGPNGSGKSNTIDGICFVLGKTSAKSLRAGKFNQLITYHNGKRADYAEVTLFFDNINREIPIDSDKVGICRKVKLNGDNNYYVVWYEVEKQNTKINTESSQKKTSKASKVEKRRRMKKNEVLDLLSKISLIADGPNIILQGDLLRIIDTSPNERRKILDEVSGVAEFDEKSEKAKKELSQAREYIEKIDIRINEVRANLEKLKKEKEDAEKYTVYNKKLKVTKYILTSKKVEFLKMVLDETKDEIEALKETKNCYIQDISNIDSEIIGLKVKINELVNELNEKGSEEVMELHKSIKELEVNLNNDKNALENAIDDLKHTLKMEESKNNDLNETKEKINNIRIDTLKKEAEAKVLIKEIEKLNEERQNLEKKVEQSESQVKALKNQESKLSERINDTQKELYGLKNELNQLENTLNNRTFDYQKNNETIENLTNQIAEFSDLEDTKKLYKELEDIAVELEFSKKKLQEKITERNDSQSKLDNLHSEYVKENARIKTLKDMENFSLDRAVKGVLDAKLPGVVDIAGNLAKTKGEYKTAIEVAGGARLNHIVVKKMDDGSRAINYLKQKRLGRATFLPMDRIKGMDAKDISDTGIIGKAIDLVEFDIKYTNVFKFIFGNTHIVDNLENAKKLSLKYKARFVTLEGEVIEPSGAMVGGNIRRNSAIKVDIDMKKLTNLSEDIKELEQILSNVKDEIERLNNKINTCSTRKLELDNRLKIARDQEFKKEEITKSNNLKIKELNMLNSKIDDEISELTDEKEILSQKVQNLDNKLSEVMGQRERIVNEIKSYENSELSKRIKEIDHKIRENESSKNTLENEIKKGAILVKEVLIPKISELNSNIKSLADKKNMFKNSVEIYKSNIESNSSILSDKRGKYEELTKGLKDLTDKKECYELEIENLQNNKEELREKATDIDNQVNVINVDRAKYETRLEEEERKLYLCDTLENIEDISDEMIEETYSLEIDDLERNQALLESSIKKLEPVNMRAIEDYDFINERYEELFGKRKEYEQEEGKYLQLISEVQKRKKETFMKTYDRVAENYEQIYGEIGGNGKLSLENEEDPFSGGLLIDASPMNKQLQNLDVMSGGEKSLTALAFLFAIQRLNPSPFYVLDEVDAALDTKNASLIGDMISNASKESQFIVISHREQMISKSNVMYGVCMENGLSKIVSVKL.

32–39 (PNGSGKSN) is a binding site for ATP. The stretch at 192-528 (GVAEFDEKSE…NARIKTLKDM (337 aa)) forms a coiled coil. Residues 546–658 (PGVVDIAGNL…VDNLENAKKL (113 aa)) form the SMC hinge domain. Residues 691-1051 (IKVDIDMKKL…YLQLISEVQK (361 aa)) adopt a coiled-coil conformation.

Belongs to the SMC family. In terms of assembly, homodimer.

It is found in the cytoplasm. Functionally, required for chromosome condensation and partitioning. In Methanococcus voltae, this protein is Chromosome partition protein Smc.